The chain runs to 119 residues: Glucitol operon activator protein (119 aa).

A DNA-binding region (H-T-H motif) is located at residues 23-29 (QISRFNR).

In terms of biological role, positive regulator for glucitol operon expression. This Escherichia coli (strain K12) protein is Glucitol operon activator protein (gutM).